Here is a 64-residue protein sequence, read N- to C-terminus: Large ribosomal subunit protein bL28 (64 aa).

The segment at 1–26 is disordered; it reads MARRDQLTGKGPLSGNTRSHAMNHSK.

This sequence belongs to the bacterial ribosomal protein bL28 family.

The chain is Large ribosomal subunit protein bL28 from Ureaplasma urealyticum serovar 10 (strain ATCC 33699 / Western).